The chain runs to 207 residues: dTTP/UTP pyrophosphatase (207 aa).

The active-site Proton acceptor is D79.

Belongs to the Maf family. YhdE subfamily. The cofactor is a divalent metal cation.

It localises to the cytoplasm. The catalysed reaction is dTTP + H2O = dTMP + diphosphate + H(+). It carries out the reaction UTP + H2O = UMP + diphosphate + H(+). Functionally, nucleoside triphosphate pyrophosphatase that hydrolyzes dTTP and UTP. May have a dual role in cell division arrest and in preventing the incorporation of modified nucleotides into cellular nucleic acids. The sequence is that of dTTP/UTP pyrophosphatase from Rhodopseudomonas palustris (strain HaA2).